A 138-amino-acid chain; its full sequence is Transcription antitermination protein NusB (138 aa).

Belongs to the NusB family.

Its function is as follows. Involved in transcription antitermination. Required for transcription of ribosomal RNA (rRNA) genes. Binds specifically to the boxA antiterminator sequence of the ribosomal RNA (rrn) operons. The polypeptide is Transcription antitermination protein NusB (Helicobacter pylori (strain ATCC 700392 / 26695) (Campylobacter pylori)).